Here is a 307-residue protein sequence, read N- to C-terminus: Glycine--tRNA ligase alpha subunit (307 aa).

It belongs to the class-II aminoacyl-tRNA synthetase family. As to quaternary structure, tetramer of two alpha and two beta subunits.

The protein resides in the cytoplasm. The catalysed reaction is tRNA(Gly) + glycine + ATP = glycyl-tRNA(Gly) + AMP + diphosphate. In Levilactobacillus brevis (strain ATCC 367 / BCRC 12310 / CIP 105137 / JCM 1170 / LMG 11437 / NCIMB 947 / NCTC 947) (Lactobacillus brevis), this protein is Glycine--tRNA ligase alpha subunit.